The primary structure comprises 781 residues: Probable beta-D-xylosidase 5 (781 aa).

The N-terminal stretch at 1 to 23 (MSIRRFVRLSLLIIALVSSLCES) is a signal peptide. N-linked (GlcNAc...) asparagine glycosylation is found at Asn43, Asn103, and Asn123. Asp291 is an active-site residue. Asn342, Asn424, Asn504, Asn543, Asn601, and Asn653 each carry an N-linked (GlcNAc...) asparagine glycan.

It belongs to the glycosyl hydrolase 3 family.

The protein localises to the secreted. The protein resides in the extracellular space. Its subcellular location is the extracellular matrix. In Arabidopsis thaliana (Mouse-ear cress), this protein is Probable beta-D-xylosidase 5 (BXL5).